Reading from the N-terminus, the 804-residue chain is Lon protease 2 (804 aa).

One can recognise a Lon N-terminal domain in the interval 6-199 (MPVCPVRGSV…AVLVLLEAEL (194 aa)). 362 to 369 (GPPGVGKT) is a binding site for ATP. The Lon proteolytic domain maps to 598–779 (EPQVGVATGM…DQVLDLALVG (182 aa)). Catalysis depends on residues S685 and K728.

The protein belongs to the peptidase S16 family. Homohexamer. Organized in a ring with a central cavity.

It is found in the cytoplasm. It carries out the reaction Hydrolysis of proteins in presence of ATP.. ATP-dependent serine protease that mediates the selective degradation of mutant and abnormal proteins as well as certain short-lived regulatory proteins. Required for cellular homeostasis and for survival from DNA damage and developmental changes induced by stress. Degrades polypeptides processively to yield small peptide fragments that are 5 to 10 amino acids long. Binds to DNA in a double-stranded, site-specific manner. The polypeptide is Lon protease 2 (Thermus thermophilus (strain ATCC BAA-163 / DSM 7039 / HB27)).